Consider the following 95-residue polypeptide: PIK3R3 upstream open reading frame protein (95 aa).

The disordered stretch occupies residues 1–27 (MGPSRLVRGPRPQGMRSPYRRPGMGWP).

The polypeptide is PIK3R3 upstream open reading frame protein (Homo sapiens (Human)).